The sequence spans 264 residues: Teichoic acids export ATP-binding protein TagH (264 aa).

The ABC transporter domain occupies 5–243 (VNIKNVTKEY…YEAFLNDFKK (239 aa)). Residue 57 to 64 (GINGSGKS) participates in ATP binding.

Belongs to the ABC transporter superfamily. Teichoic acids exporter (TC 3.A.1.104.1) family. In terms of assembly, the complex is composed of two ATP-binding proteins (TagH) and two transmembrane proteins (TagG).

The protein resides in the cell membrane. The enzyme catalyses ATP + H2O + teichoic acidSide 1 = ADP + phosphate + teichoic acidSide 2.. In terms of biological role, part of the ABC transporter complex TagGH involved in teichoic acids export. Responsible for energy coupling to the transport system. This is Teichoic acids export ATP-binding protein TagH from Staphylococcus aureus (strain USA300).